The sequence spans 639 residues: Mediator of RNA polymerase II transcription subunit 17 (639 aa).

Positions 160 to 187 (RLQSFNAAADKLLKSASRLENEVASETR) form a coiled coil.

Belongs to the Mediator complex subunit 17 family. Component of the Mediator complex.

Its subcellular location is the nucleus. Its function is as follows. Component of the Mediator complex, a coactivator involved in the regulated transcription of nearly all RNA polymerase II-dependent genes. Mediator functions as a bridge to convey information from gene-specific regulatory proteins to the basal RNA polymerase II transcription machinery. Mediator is recruited to promoters by direct interactions with regulatory proteins and serves as a scaffold for the assembly of a functional preinitiation complex with RNA polymerase II and the general transcription factors. This chain is Mediator of RNA polymerase II transcription subunit 17 (srb4), found in Aspergillus fumigatus (strain ATCC MYA-4609 / CBS 101355 / FGSC A1100 / Af293) (Neosartorya fumigata).